Here is a 405-residue protein sequence, read N- to C-terminus: ATP phosphoribosyltransferase regulatory subunit (405 aa).

It belongs to the class-II aminoacyl-tRNA synthetase family. HisZ subfamily. As to quaternary structure, heteromultimer composed of HisG and HisZ subunits.

The protein resides in the cytoplasm. It participates in amino-acid biosynthesis; L-histidine biosynthesis; L-histidine from 5-phospho-alpha-D-ribose 1-diphosphate: step 1/9. Its function is as follows. Required for the first step of histidine biosynthesis. May allow the feedback regulation of ATP phosphoribosyltransferase activity by histidine. This Microcystis aeruginosa (strain NIES-843 / IAM M-2473) protein is ATP phosphoribosyltransferase regulatory subunit.